Here is a 353-residue protein sequence, read N- to C-terminus: Lactosylceramide 4-alpha-galactosyltransferase (353 aa).

Residues 1–22 (MSKPPDLLLRLLRGAPRQRVCT) are Cytoplasmic-facing. A helical; Signal-anchor for type II membrane protein membrane pass occupies residues 23–43 (LFIIGFKFTFFVSIMIYWHVV). At 44-353 (GEPKEKGQLY…TTHEAMKMYL (310 aa)) the chain is on the lumenal side. N-linked (GlcNAc...) asparagine glycosylation is present at Asn-121. The DXD motif motif lies at 192–194 (DTD). Asn-203 carries N-linked (GlcNAc...) asparagine glycosylation.

This sequence belongs to the glycosyltransferase 32 family.

It is found in the golgi apparatus membrane. It carries out the reaction a beta-D-Gal-(1-&gt;4)-beta-D-Glc-(1&lt;-&gt;1)-Cer(d18:1(4E)) + UDP-alpha-D-galactose = a globoside Gb3Cer (d18:1(4E)) + UDP + H(+). The catalysed reaction is a beta-D-Gal-(1&lt;-&gt;1')-ceramide + UDP-alpha-D-galactose = alpha-D-Gal-(1-&gt;4)-beta-D-Gal-(1&lt;-&gt;1')-Cer + UDP + H(+). It participates in glycolipid biosynthesis. Functionally, catalyzes the transfer of galactose from UDP-alpha-D-galactose to lactosylceramide/beta-D-galactosyl-(1-&gt;4)-beta-D-glucosyl-(1&lt;-&gt;1)-ceramide(d18:1(4E)) to produce globotriaosylceramide/globoside Gb3Cer (d18:1(4E)). Also able to transfer galactose to galactosylceramide/beta-D-Gal-(1&lt;-&gt;1')-Cer. Globoside Gb3Cer is a glycosphingolipid of the globo serie, one of the major types of neutral root structures of glycosphingolipids, that constitute a significant portion of mammalian cell membranes. The polypeptide is Lactosylceramide 4-alpha-galactosyltransferase (A4GALT) (Pan troglodytes (Chimpanzee)).